The primary structure comprises 57 residues: uncharacterized protein (57 aa).

A helical transmembrane segment spans residues 3–23; the sequence is PLTLLIIIGGVILGNELIISL. Positions 38 to 57 are disordered; sequence KHKHKTQENYETFASDKKRT.

Its subcellular location is the host membrane. This is an uncharacterized protein from Acidianus bottle-shaped virus (isolate Italy/Pozzuoli) (ABV).